A 647-amino-acid polypeptide reads, in one-letter code: 1-phosphatidylinositol 4,5-bisphosphate phosphodiesterase zeta-1 (647 aa).

In terms of domain architecture, EF-hand spans 43-78 (CHFAHVKHIFKENDRQNQGRITIEEFRAIYRCIVHR). The 145-residue stretch at 163–307 (QDMNHPLSDY…LKFKILVKNR (145 aa)) folds into the PI-PLC X-box domain. Residues His-178 and His-223 contribute to the active site. One can recognise a PI-PLC Y-box domain in the interval 386–502 (LSDLVIYTKA…GYILKPDILR (117 aa)). Positions 502-627 (RDTTLGFNPN…KGYRRVPLFS (126 aa)) constitute a C2 domain.

In terms of assembly, interacts via its C2 domain with PtdIns(3)P and, to a lesser extent, PtdIns(5)P in vitro. Requires Ca(2+) as cofactor. Highly expressed in postpuberal testis, where expression is sperm cell-specific. Also expressed in brain of both sexes.

The protein localises to the nucleus. The protein resides in the cytoplasm. It is found in the perinuclear region. It catalyses the reaction a 1,2-diacyl-sn-glycero-3-phospho-(1D-myo-inositol-4,5-bisphosphate) + H2O = 1D-myo-inositol 1,4,5-trisphosphate + a 1,2-diacyl-sn-glycerol + H(+). Functionally, the production of the second messenger molecules diacylglycerol (DAG) and inositol 1,4,5-trisphosphate (IP3) is mediated by activated phosphatidylinositol-specific phospholipase C enzymes. In vitro, hydrolyzes PtdIns(4,5)P2 in a Ca(2+)-dependent manner. Triggers intracellular Ca(2+) oscillations in oocytes solely during M phase and is involved in inducing oocyte activation and initiating embryonic development up to the blastocyst stage. Is therefore a strong candidate for the egg-activating soluble sperm factor that is transferred from the sperm into the egg cytoplasm following gamete membrane fusion. May exert an inhibitory effect on phospholipase-C-coupled processes that depend on calcium ions and protein kinase C, including CFTR trafficking and function. In Mus musculus (Mouse), this protein is 1-phosphatidylinositol 4,5-bisphosphate phosphodiesterase zeta-1.